Reading from the N-terminus, the 203-residue chain is Urease accessory protein UreG (203 aa).

Glycine 14 to threonine 21 serves as a coordination point for GTP.

It belongs to the SIMIBI class G3E GTPase family. UreG subfamily. Homodimer. UreD, UreF and UreG form a complex that acts as a GTP-hydrolysis-dependent molecular chaperone, activating the urease apoprotein by helping to assemble the nickel containing metallocenter of UreC. The UreE protein probably delivers the nickel.

It is found in the cytoplasm. Facilitates the functional incorporation of the urease nickel metallocenter. This process requires GTP hydrolysis, probably effectuated by UreG. The protein is Urease accessory protein UreG of Sinorhizobium fredii (strain NBRC 101917 / NGR234).